We begin with the raw amino-acid sequence, 332 residues long: Probable allantoicase (332 aa).

Belongs to the allantoicase family.

The enzyme catalyses allantoate + H2O = (S)-ureidoglycolate + urea. It participates in nitrogen metabolism; (S)-allantoin degradation; (S)-ureidoglycolate from allantoate (aminidohydrolase route): step 1/1. This Pseudomonas aeruginosa (strain LESB58) protein is Probable allantoicase.